Here is a 498-residue protein sequence, read N- to C-terminus: Glycerol kinase (498 aa).

T12 contacts ADP. Residues T12, T13, and S14 each coordinate ATP. T12 contacts sn-glycerol 3-phosphate. R16 serves as a coordination point for ADP. Residues R82, E83, and Y134 each coordinate sn-glycerol 3-phosphate. Glycerol is bound by residues R82, E83, and Y134. H230 is modified (phosphohistidine; by HPr). D244 contributes to the sn-glycerol 3-phosphate binding site. The glycerol site is built by D244 and Q245. Residues T266 and G309 each coordinate ADP. Residues T266, G309, Q313, and G410 each contribute to the ATP site. ADP-binding residues include G410 and N414.

This sequence belongs to the FGGY kinase family. In terms of assembly, homotetramer and homodimer (in equilibrium). Post-translationally, the phosphoenolpyruvate-dependent sugar phosphotransferase system (PTS), including enzyme I, and histidine-containing protein (HPr) are required for the phosphorylation, which leads to the activation of the enzyme.

It catalyses the reaction glycerol + ATP = sn-glycerol 3-phosphate + ADP + H(+). Its pathway is polyol metabolism; glycerol degradation via glycerol kinase pathway; sn-glycerol 3-phosphate from glycerol: step 1/1. Activated by phosphorylation and inhibited by fructose 1,6-bisphosphate (FBP). Key enzyme in the regulation of glycerol uptake and metabolism. Catalyzes the phosphorylation of glycerol to yield sn-glycerol 3-phosphate. This chain is Glycerol kinase, found in Staphylococcus aureus (strain MRSA252).